Consider the following 626-residue polypeptide: Transketolase-like protein 2 (626 aa).

Residues Ser41, His78, and 124–126 (GSL) each bind thiamine diphosphate. Asp156 contributes to the Mg(2+) binding site. Residues Gly157 and Asn186 each coordinate thiamine diphosphate. Residues Asn186 and Leu188 each coordinate Mg(2+). Residues Lys248 and His262 each contribute to the thiamine diphosphate site. Substrate contacts are provided by His262 and Ser349. The thiamine diphosphate site is built by Glu370 and Phe396. The active-site Proton donor is the Glu370. Residues His420 and Asp428 each contribute to the substrate site. Gln432 is a binding site for thiamine diphosphate.

Belongs to the transketolase family. As to quaternary structure, homodimer. Mg(2+) serves as cofactor. It depends on Ca(2+) as a cofactor. The cofactor is Mn(2+). Co(2+) is required as a cofactor. Requires thiamine diphosphate as cofactor. Overexpressed in hepatoma cancer cells.

The catalysed reaction is D-sedoheptulose 7-phosphate + D-glyceraldehyde 3-phosphate = aldehydo-D-ribose 5-phosphate + D-xylulose 5-phosphate. Plays an essential role in total transketolase activity and cell proliferation in cancer cells; after transfection with anti-TKTL1 siRNA, total transketolase activity dramatically decreases and proliferation was significantly inhibited in cancer cells. Plays a pivotal role in carcinogenesis. The protein is Transketolase-like protein 2 (TKTL2) of Homo sapiens (Human).